A 338-amino-acid chain; its full sequence is Anthranilate phosphoribosyltransferase (338 aa).

Residues G81, 84-85 (GD), T89, 91-94 (NIST), 109-117 (KHGNRAVSS), and S121 contribute to the 5-phospho-alpha-D-ribose 1-diphosphate site. Residue G81 participates in anthranilate binding. A Mg(2+)-binding site is contributed by S93. N112 is an anthranilate binding site. R167 contributes to the anthranilate binding site. Residues D226 and E227 each contribute to the Mg(2+) site.

It belongs to the anthranilate phosphoribosyltransferase family. Homodimer. It depends on Mg(2+) as a cofactor.

It catalyses the reaction N-(5-phospho-beta-D-ribosyl)anthranilate + diphosphate = 5-phospho-alpha-D-ribose 1-diphosphate + anthranilate. Its pathway is amino-acid biosynthesis; L-tryptophan biosynthesis; L-tryptophan from chorismate: step 2/5. Catalyzes the transfer of the phosphoribosyl group of 5-phosphorylribose-1-pyrophosphate (PRPP) to anthranilate to yield N-(5'-phosphoribosyl)-anthranilate (PRA). This Myxococcus xanthus (strain DK1622) protein is Anthranilate phosphoribosyltransferase.